Consider the following 461-residue polypeptide: Aspartyl/glutamyl-tRNA(Asn/Gln) amidotransferase subunit B (461 aa).

The protein belongs to the GatB/GatE family. GatB subfamily. As to quaternary structure, heterotrimer of A, B and C subunits.

It catalyses the reaction L-glutamyl-tRNA(Gln) + L-glutamine + ATP + H2O = L-glutaminyl-tRNA(Gln) + L-glutamate + ADP + phosphate + H(+). It carries out the reaction L-aspartyl-tRNA(Asn) + L-glutamine + ATP + H2O = L-asparaginyl-tRNA(Asn) + L-glutamate + ADP + phosphate + 2 H(+). Functionally, allows the formation of correctly charged Asn-tRNA(Asn) or Gln-tRNA(Gln) through the transamidation of misacylated Asp-tRNA(Asn) or Glu-tRNA(Gln) in organisms which lack either or both of asparaginyl-tRNA or glutaminyl-tRNA synthetases. The reaction takes place in the presence of glutamine and ATP through an activated phospho-Asp-tRNA(Asn) or phospho-Glu-tRNA(Gln). This chain is Aspartyl/glutamyl-tRNA(Asn/Gln) amidotransferase subunit B, found in Methanopyrus kandleri (strain AV19 / DSM 6324 / JCM 9639 / NBRC 100938).